The following is a 376-amino-acid chain: uncharacterized protein (376 aa).

The protein belongs to the mimivirus L17x/L18x family.

This is an uncharacterized protein from Acanthamoeba polyphaga (Amoeba).